We begin with the raw amino-acid sequence, 519 residues long: Glutamate--cysteine ligase (519 aa).

It belongs to the glutamate--cysteine ligase type 1 family. Type 1 subfamily.

It catalyses the reaction L-cysteine + L-glutamate + ATP = gamma-L-glutamyl-L-cysteine + ADP + phosphate + H(+). Its pathway is sulfur metabolism; glutathione biosynthesis; glutathione from L-cysteine and L-glutamate: step 1/2. The chain is Glutamate--cysteine ligase from Photorhabdus laumondii subsp. laumondii (strain DSM 15139 / CIP 105565 / TT01) (Photorhabdus luminescens subsp. laumondii).